Consider the following 222-residue polypeptide: ATP synthase F(0) complex subunit a (222 aa).

A run of 6 helical transmembrane segments spans residues 7 to 27 (AFFDVPVGTMMLAIAFPAILL), 64 to 84 (WSLMLITLTLFIGLTNLLGLL), 93 to 113 (QLTVNLSMAIPLWTGTVILGF), 132 to 152 (FLIPMIIIIETISLLIRPVTL), 160 to 180 (ITAGHLLIHLTGTAALTLLSI), and 185 to 205 (ITVTFITVVVLTILELAVALI).

Belongs to the ATPase A chain family. As to quaternary structure, component of the ATP synthase complex composed at least of ATP5F1A/subunit alpha, ATP5F1B/subunit beta, ATP5MC1/subunit c (homooctomer), MT-ATP6/subunit a, MT-ATP8/subunit 8, ATP5ME/subunit e, ATP5MF/subunit f, ATP5MG/subunit g, ATP5MK/subunit k, ATP5MJ/subunit j, ATP5F1C/subunit gamma, ATP5F1D/subunit delta, ATP5F1E/subunit epsilon, ATP5PF/subunit F6, ATP5PB/subunit b, ATP5PD/subunit d, ATP5PO/subunit OSCP. ATP synthase complex consists of a soluble F(1) head domain (subunits alpha(3) and beta(3)) - the catalytic core - and a membrane F(0) domain - the membrane proton channel (subunits c, a, 8, e, f, g, k and j). These two domains are linked by a central stalk (subunits gamma, delta, and epsilon) rotating inside the F1 region and a stationary peripheral stalk (subunits F6, b, d, and OSCP). Interacts with DNAJC30; interaction is direct.

The protein localises to the mitochondrion inner membrane. It catalyses the reaction H(+)(in) = H(+)(out). In terms of biological role, subunit a, of the mitochondrial membrane ATP synthase complex (F(1)F(0) ATP synthase or Complex V) that produces ATP from ADP in the presence of a proton gradient across the membrane which is generated by electron transport complexes of the respiratory chain. ATP synthase complex consist of a soluble F(1) head domain - the catalytic core - and a membrane F(1) domain - the membrane proton channel. These two domains are linked by a central stalk rotating inside the F(1) region and a stationary peripheral stalk. During catalysis, ATP synthesis in the catalytic domain of F(1) is coupled via a rotary mechanism of the central stalk subunits to proton translocation. With the subunit c (ATP5MC1), forms the proton-conducting channel in the F(0) domain, that contains two crucial half-channels (inlet and outlet) that facilitate proton movement from the mitochondrial intermembrane space (IMS) into the matrix. Protons are taken up via the inlet half-channel and released through the outlet half-channel, following a Grotthuss mechanism. The protein is ATP synthase F(0) complex subunit a of Mammuthus primigenius (Siberian woolly mammoth).